We begin with the raw amino-acid sequence, 159 residues long: 2-C-methyl-D-erythritol 2,4-cyclodiphosphate synthase (159 aa).

2 residues coordinate a divalent metal cation: Asp-10 and His-12. 4-CDP-2-C-methyl-D-erythritol 2-phosphate is bound by residues 10 to 12 (DVH) and 36 to 37 (HS). His-44 provides a ligand contact to a divalent metal cation. 4-CDP-2-C-methyl-D-erythritol 2-phosphate-binding positions include 58-60 (DIG), 134-137 (TTSE), Phe-141, and Arg-144.

It belongs to the IspF family. Homotrimer. A divalent metal cation serves as cofactor.

It catalyses the reaction 4-CDP-2-C-methyl-D-erythritol 2-phosphate = 2-C-methyl-D-erythritol 2,4-cyclic diphosphate + CMP. Its pathway is isoprenoid biosynthesis; isopentenyl diphosphate biosynthesis via DXP pathway; isopentenyl diphosphate from 1-deoxy-D-xylulose 5-phosphate: step 4/6. In terms of biological role, involved in the biosynthesis of isopentenyl diphosphate (IPP) and dimethylallyl diphosphate (DMAPP), two major building blocks of isoprenoid compounds. Catalyzes the conversion of 4-diphosphocytidyl-2-C-methyl-D-erythritol 2-phosphate (CDP-ME2P) to 2-C-methyl-D-erythritol 2,4-cyclodiphosphate (ME-CPP) with a corresponding release of cytidine 5-monophosphate (CMP). The chain is 2-C-methyl-D-erythritol 2,4-cyclodiphosphate synthase from Cereibacter sphaeroides (strain ATCC 17025 / ATH 2.4.3) (Rhodobacter sphaeroides).